A 223-amino-acid polypeptide reads, in one-letter code: Orotate phosphoribosyltransferase (223 aa).

5-phospho-alpha-D-ribose 1-diphosphate-binding positions include R107, K108, K111, H113, and 133-141 (EDLTTAGGS). T137 contributes to the orotate binding site. Residues 192–211 (SPGSRSSSTTRRCRKSSPSS) show a composition bias toward low complexity. Positions 192-212 (SPGSRSSSTTRRCRKSSPSSM) are disordered.

It belongs to the purine/pyrimidine phosphoribosyltransferase family. PyrE subfamily. Homodimer. The cofactor is Mg(2+).

It catalyses the reaction orotidine 5'-phosphate + diphosphate = orotate + 5-phospho-alpha-D-ribose 1-diphosphate. The protein operates within pyrimidine metabolism; UMP biosynthesis via de novo pathway; UMP from orotate: step 1/2. Catalyzes the transfer of a ribosyl phosphate group from 5-phosphoribose 1-diphosphate to orotate, leading to the formation of orotidine monophosphate (OMP). This chain is Orotate phosphoribosyltransferase (pyrE), found in Rhizobium leguminosarum bv. trifolii.